The primary structure comprises 326 residues: Dipeptide transport ATP-binding protein DppD (326 aa).

The 251-residue stretch at 5–255 folds into the ABC transporter domain; that stretch reads IRVEDLRAVY…PLHPYTRGLI (251 aa). Residues 44–49, Asn-61, and Gln-97 each bind ATP; that span reads ASGKST. [4Fe-4S] cluster contacts are provided by Cys-285, Cys-291, Cys-298, and Cys-316.

The protein belongs to the ABC transporter superfamily.

The protein localises to the cell membrane. The enzyme catalyses a dipeptide(out) + ATP + H2O = a dipeptide(in) + ADP + phosphate + H(+). Its activity is regulated as follows. The C-terminal iron-sulfur cluster may stabilize the structure of the C-terminal loops and may function in the regulation of the transport process. In terms of biological role, part of the ABC transporter Dpp involved in dipeptide transport. Responsible for energy coupling to the transport system. This Caldanaerobacter subterraneus subsp. tengcongensis (strain DSM 15242 / JCM 11007 / NBRC 100824 / MB4) (Thermoanaerobacter tengcongensis) protein is Dipeptide transport ATP-binding protein DppD.